Consider the following 443-residue polypeptide: KICSTOR complex protein ITFG2 (443 aa).

Residues 19–48 form an FG-GAP 1; atypical repeat; that stretch reads FPHAICLGDVDNDALNELVVGDTSGKLSVY. S104 carries the phosphoserine modification. The stretch at 125 to 154 is one FG-GAP 2; atypical repeat; that stretch reads NTKVMLISDIDGDGCYELVVGYTDRVVRAF. S219 bears the Phosphoserine mark.

In terms of assembly, part of the KICSTOR complex composed of KPTN, ITFG2, KICS2 and SZT2. SZT2 probably serves as a link between the other three proteins in the KICSTOR complex and may mediate the direct interaction with the GATOR complex via GATOR1. The KICSTOR complex interacts directly with the GATOR1 complex and most probably indirectly with the GATOR2 complex in an amino acid-independent manner.

It localises to the lysosome membrane. Its function is as follows. As part of the KICSTOR complex functions in the amino acid-sensing branch of the TORC1 signaling pathway. Recruits, in an amino acid-independent manner, the GATOR1 complex to the lysosomal membranes and allows its interaction with GATOR2 and the RAG GTPases. Functions upstream of the RAG GTPases and is required to negatively regulate mTORC1 signaling in absence of amino acids. In absence of the KICSTOR complex mTORC1 is constitutively localized to the lysosome and activated. The KICSTOR complex is also probably involved in the regulation of mTORC1 by glucose. This chain is KICSTOR complex protein ITFG2, found in Mus musculus (Mouse).